A 447-amino-acid polypeptide reads, in one-letter code: Thiol-specific monooxygenase (447 aa).

FAD-binding positions include 13 to 17 (GAGPS), Glu-38, 46 to 47 (VW), 91 to 92 (NT), and 137 to 138 (DV). 90–91 (TN) provides a ligand contact to NADP(+). 223 to 226 (SAND) contributes to the NADP(+) binding site.

The protein belongs to the FMO family. As to quaternary structure, monomer. FAD is required as a cofactor.

Its function is as follows. Flavin-dependent oxidation of thiol-containing compounds. Probably required for the correct folding of disulfide-bonded proteins. The polypeptide is Thiol-specific monooxygenase (fmo1) (Schizosaccharomyces pombe (strain 972 / ATCC 24843) (Fission yeast)).